A 756-amino-acid polypeptide reads, in one-letter code: Inactive carboxypeptidase-like protein X2 (756 aa).

Positions 1–25 (MSRPGTATPALALVLLAVTLAGVGA) are cleaved as a signal peptide. Residues 51–131 (EPELETFSPP…DHSVRVARED (81 aa)) form a disordered region. Residues 68–78 (EWERRPQEPRP) are compositionally biased toward basic and acidic residues. Over residues 79 to 90 (PKRATKPKKAPK) the composition is skewed to basic residues. Residues 113–131 (KSSEKAANDDHSVRVARED) are compositionally biased toward basic and acidic residues. The F5/8 type C domain maps to 134–293 (ESCPPLGLET…ICMRMEILGC (160 aa)). Cys-136 and Cys-293 form a disulfide bridge. Residues Asn-231, Asn-241, Asn-281, Asn-337, and Asn-491 are each glycosylated (N-linked (GlcNAc...) asparagine). Positions 317-640 (KHHNYKEMRQ…ESLIVFMEQV (324 aa)) constitute a Peptidase M14 domain.

Belongs to the peptidase M14 family.

The protein localises to the secreted. Its function is as follows. May be involved in cell-cell interactions. This chain is Inactive carboxypeptidase-like protein X2 (CPXM2), found in Homo sapiens (Human).